The primary structure comprises 65 residues: Kappa-scoloptoxin(04)-Ssd1a (65 aa).

An N-terminal signal peptide occupies residues 1-24 (MKKTCVVSVFLVLLLLKFHDLSMG). Residues 25–36 (EEISPLKKVAPR) constitute a propeptide that is removed on maturation. 2 disulfides stabilise this stretch: C42/C53 and C47/C60.

As to expression, expressed by the venom gland.

It is found in the secreted. Its function is as follows. Voltage-gated potassium channel inhibitor. This chain is Kappa-scoloptoxin(04)-Ssd1a, found in Scolopendra dehaani (Thai centipede).